Consider the following 416-residue polypeptide: UBX domain-containing protein 4 (416 aa).

One can recognise a UBX domain in the interval 273 to 350 (KAISECLLRV…EFGSKTMLLF (78 aa)). Residues 376–402 (TRTTPSVNTINKSNPQGPSDNATSIKK) form a disordered region. A compositionally biased stretch (polar residues) spans 378–402 (TTPSVNTINKSNPQGPSDNATSIKK).

It is found in the nucleus. It localises to the cytoplasm. In terms of biological role, involved in CDC48-dependent protein degradation through the ubiquitin/proteasome pathway. In Saccharomyces cerevisiae (strain ATCC 204508 / S288c) (Baker's yeast), this protein is UBX domain-containing protein 4 (UBX4).